We begin with the raw amino-acid sequence, 325 residues long: GTP 3',8-cyclase (325 aa).

One can recognise a Radical SAM core domain in the interval 1 to 226; that stretch reads MNTVNYLRIS…EGACYGNGPA (226 aa). Residue Arg-8 participates in GTP binding. 2 residues coordinate [4Fe-4S] cluster: Cys-15 and Cys-19. An S-adenosyl-L-methionine-binding site is contributed by Tyr-21. Cys-22 provides a ligand contact to [4Fe-4S] cluster. Arg-60 is a GTP binding site. Gly-64 serves as a coordination point for S-adenosyl-L-methionine. Ser-91 contacts GTP. Position 115 (Ser-115) interacts with S-adenosyl-L-methionine. Residue Lys-152 participates in GTP binding. Met-186 contributes to the S-adenosyl-L-methionine binding site. Cys-249 and Cys-252 together coordinate [4Fe-4S] cluster. A GTP-binding site is contributed by 254–256; it reads RVR. Residue Cys-266 coordinates [4Fe-4S] cluster.

The protein belongs to the radical SAM superfamily. MoaA family. As to quaternary structure, monomer and homodimer. [4Fe-4S] cluster is required as a cofactor.

The catalysed reaction is GTP + AH2 + S-adenosyl-L-methionine = (8S)-3',8-cyclo-7,8-dihydroguanosine 5'-triphosphate + 5'-deoxyadenosine + L-methionine + A + H(+). Its pathway is cofactor biosynthesis; molybdopterin biosynthesis. Functionally, catalyzes the cyclization of GTP to (8S)-3',8-cyclo-7,8-dihydroguanosine 5'-triphosphate. The sequence is that of GTP 3',8-cyclase from Gloeobacter violaceus (strain ATCC 29082 / PCC 7421).